Here is an 833-residue protein sequence, read N- to C-terminus: Lon protease (833 aa).

The region spanning 3–198 is the Lon N-terminal domain; the sequence is YPFMATRGVI…LIFSFLVELK (196 aa). 390–397 is an ATP binding site; sequence GPPGTGKT. The Lon proteolytic domain maps to 627-808; sequence YERIGAVNGL…DEIFENLFGK (182 aa). Residues serine 714 and lysine 757 contribute to the active site.

It belongs to the peptidase S16 family. In terms of assembly, homohexamer. Organized in a ring with a central cavity.

Its subcellular location is the cytoplasm. The enzyme catalyses Hydrolysis of proteins in presence of ATP.. Functionally, ATP-dependent serine protease that mediates the selective degradation of mutant and abnormal proteins as well as certain short-lived regulatory proteins. Required for cellular homeostasis and for survival from DNA damage and developmental changes induced by stress. Degrades polypeptides processively to yield small peptide fragments that are 5 to 10 amino acids long. Binds to DNA in a double-stranded, site-specific manner. The chain is Lon protease from Mycoplasma mobile (strain ATCC 43663 / 163K / NCTC 11711) (Mesomycoplasma mobile).